A 234-amino-acid polypeptide reads, in one-letter code: Thrombin-like enzyme acutin (234 aa).

M1 is a propeptide. The 224-residue stretch at 2 to 225 (VIGGDECDIN…YTDWIQRNIA (224 aa)) folds into the Peptidase S1 domain. Intrachain disulfides connect C8-C140, C27-C43, C75-C232, C119-C186, C151-C165, and C176-C201. N21 is a glycosylation site (N-linked (GlcNAc...) asparagine). Catalysis depends on charge relay system residues H42 and D87. S180 serves as the catalytic Charge relay system.

The protein belongs to the peptidase S1 family. Snake venom subfamily. In terms of assembly, monomer. As to expression, expressed by the venom gland.

It localises to the secreted. Its function is as follows. Thrombin-like snake venom serine protease. Has arginyl esterase and fibrinogen clotting activities. The sequence is that of Thrombin-like enzyme acutin from Deinagkistrodon acutus (Hundred-pace snake).